The following is a 27-amino-acid chain: uncharacterized protein (27 aa).

It localises to the plastid. Its subcellular location is the chloroplast. This is an uncharacterized protein from Marchantia polymorpha (Common liverwort).